The following is a 427-amino-acid chain: Putative transporter YdfJ (427 aa).

Topologically, residues 1-7 (MDFQLYS) are cytoplasmic. A run of 2 helical transmembrane segments spans residues 8–28 (LGAALVFHEIFFPESSTAMAL) and 29–49 (ILAMGTYGAGYVARIVGAFIF). Over 50 to 74 (GKMGDRIGRKKVLFITITMMGICTT) the chain is Cytoplasmic. A helical membrane pass occupies residues 75–95 (LIGVLPTYAQIGVFAPILLVT). The Periplasmic segment spans residues 96 to 97 (LR). Residues 98–118 (IIQGLGAGAEISGAGTMLAEY) traverse the membrane as a helical segment. Over 119-132 (APKGKRGIISSFVA) the chain is Cytoplasmic. A helical transmembrane segment spans residues 133 to 153 (MGTNCGTLSATAIWAFMFFIL). Residues 154 to 157 (SKEE) lie on the Periplasmic side of the membrane. The chain crosses the membrane as a helical span at residues 158-178 (LLAWGWRIPFLASVVVMVFAI). Residues 179 to 225 (WLRMNLKESPVFEKVNDSNQPTAKPAPAGSMFQSKSFWLATGLRFGQ) are Cytoplasmic-facing. Residues 226-246 (AGNSGLIQTFLAGYLVQTLLF) form a helical membrane-spanning segment. At 247 to 251 (NKAIP) the chain is on the periplasmic side. A helical membrane pass occupies residues 252–272 (TDALMISSILGFMTIPFLGWL). At 273 to 279 (SDKIGRR) the chain is on the cytoplasmic side. The helical transmembrane segment at 280–300 (IPYIIMNTSAIVLAWPMLSII) threads the bilayer. At 301–307 (VDKSYAP) the chain is on the periplasmic side. A helical transmembrane segment spans residues 308-328 (STIMVALIVIHNCAVLGLFAL). The Cytoplasmic segment spans residues 329–351 (ENITMAEMFGCKNRFTRMAISKE). Residues 352–372 (IGGLIASGFGPILAGIFCTMT) form a helical membrane-spanning segment. A topological domain (periplasmic) is located at residue Glu-373. Residues 374 to 394 (SWYPIAIMIMAYSVIGLISAL) traverse the membrane as a helical segment. Topologically, residues 395–427 (KMPEVKDRDLSALEDAAEDQPRVVRAAQPSRSL) are cytoplasmic.

The protein belongs to the major facilitator superfamily. Metabolite:H+ Symporter (MHS) family (TC 2.A.1.6) family.

The protein localises to the cell inner membrane. In terms of biological role, when overexpressed in human HEK-293 cells forms an inward rectifying potassium channel. The polypeptide is Putative transporter YdfJ (ydfJ) (Escherichia coli (strain K12)).